Here is a 157-residue protein sequence, read N- to C-terminus: 3-hydroxyacyl-[acyl-carrier-protein] dehydratase FabZ (157 aa).

His58 is a catalytic residue.

This sequence belongs to the thioester dehydratase family. FabZ subfamily.

It localises to the cytoplasm. The catalysed reaction is a (3R)-hydroxyacyl-[ACP] = a (2E)-enoyl-[ACP] + H2O. In terms of biological role, involved in unsaturated fatty acids biosynthesis. Catalyzes the dehydration of short chain beta-hydroxyacyl-ACPs and long chain saturated and unsaturated beta-hydroxyacyl-ACPs. The protein is 3-hydroxyacyl-[acyl-carrier-protein] dehydratase FabZ of Rhizobium rhizogenes (strain K84 / ATCC BAA-868) (Agrobacterium radiobacter).